The following is a 255-amino-acid chain: Small ribosomal subunit protein uS2 (255 aa).

Positions 226 to 255 are disordered; sequence QGVSNEEVAAEQNIDLDEKEKSEETEATEE.

This sequence belongs to the universal ribosomal protein uS2 family.

This is Small ribosomal subunit protein uS2 from Staphylococcus aureus (strain JH1).